The chain runs to 94 residues: Aspartyl/glutamyl-tRNA(Asn/Gln) amidotransferase subunit C (94 aa).

It belongs to the GatC family. As to quaternary structure, heterotrimer of A, B and C subunits.

It catalyses the reaction L-glutamyl-tRNA(Gln) + L-glutamine + ATP + H2O = L-glutaminyl-tRNA(Gln) + L-glutamate + ADP + phosphate + H(+). The catalysed reaction is L-aspartyl-tRNA(Asn) + L-glutamine + ATP + H2O = L-asparaginyl-tRNA(Asn) + L-glutamate + ADP + phosphate + 2 H(+). Functionally, allows the formation of correctly charged Asn-tRNA(Asn) or Gln-tRNA(Gln) through the transamidation of misacylated Asp-tRNA(Asn) or Glu-tRNA(Gln) in organisms which lack either or both of asparaginyl-tRNA or glutaminyl-tRNA synthetases. The reaction takes place in the presence of glutamine and ATP through an activated phospho-Asp-tRNA(Asn) or phospho-Glu-tRNA(Gln). This chain is Aspartyl/glutamyl-tRNA(Asn/Gln) amidotransferase subunit C, found in Desulfatibacillum aliphaticivorans.